The following is a 391-amino-acid chain: mRNA-capping enzyme subunit alpha (391 aa).

Lys63 acts as the N6-GMP-lysine intermediate in catalysis. Positions 363-391 are disordered; sequence KERNRRPRDEDRKRVGGDDHDHGAKRARQ.

This sequence belongs to the eukaryotic GTase family. As to quaternary structure, heterodimer. The mRNA-capping enzyme is composed of two separate chains alpha and beta, respectively a mRNA guanylyltransferase and an mRNA 5'-triphosphate monophosphatase.

The protein localises to the nucleus. The catalysed reaction is a 5'-end diphospho-ribonucleoside in mRNA + GTP + H(+) = a 5'-end (5'-triphosphoguanosine)-ribonucleoside in mRNA + diphosphate. In terms of biological role, second step of mRNA capping. Transfer of the GMP moiety of GTP to the 5'-end of RNA via an enzyme-GMP covalent reaction intermediate. The chain is mRNA-capping enzyme subunit alpha (CEG1) from Yarrowia lipolytica (strain CLIB 122 / E 150) (Yeast).